Here is a 136-residue protein sequence, read N- to C-terminus: Putative zinc finger protein 818 (136 aa).

The C2H2-type 1; degenerate zinc finger occupies 64–83 (NVCGKVLSQNSHLVNHQRIH). A C2H2-type 2 zinc finger spans residues 89-111 (YRCHECGKAFTQGSRFINHQIVH).

Belongs to the krueppel C2H2-type zinc-finger protein family.

It is found in the nucleus. Its function is as follows. May be involved in transcriptional regulation. The chain is Putative zinc finger protein 818 (ZNF818P) from Homo sapiens (Human).